Consider the following 280-residue polypeptide: Putative protein-tyrosine sulfotransferase (280 aa).

16-20 (RSGTT) is a 3'-phosphoadenylyl sulfate binding site. C34 and C89 are oxidised to a cystine. Residue E37 is the Proton donor/acceptor of the active site. N57 is a glycosylation site (N-linked (GlcNAc...) asparagine). 3'-phosphoadenylyl sulfate contacts are provided by R116, S124, and R128. N-linked (GlcNAc...) asparagine glycosylation is present at N136. The cysteines at positions 158 and 165 are disulfide-linked. Residues Y170 and 215–224 (SASQVKNSIN) contribute to the 3'-phosphoadenylyl sulfate site.

The protein belongs to the protein sulfotransferase family.

It catalyses the reaction L-tyrosyl-[protein] + 3'-phosphoadenylyl sulfate = O-sulfo-L-tyrosine-[protein] + adenosine 3',5'-bisphosphate + H(+). In terms of biological role, catalyzes the O-sulfation of tyrosine residues within acidic motifs of polypeptides, using 3'-phosphoadenylyl sulfate (PAPS) as cosubstrate. The chain is Putative protein-tyrosine sulfotransferase from Caenorhabditis briggsae.